Consider the following 335-residue polypeptide: Aliphatic sulfonates import ATP-binding protein SsuB (335 aa).

Residues 48-71 form a disordered region; it reads PFASGGAFGRAPRDDDDDRRGAGD. Residues 74–293 form the ABC transporter domain; the sequence is VRLTRVSKRY…ARASAAFAEL (220 aa). 106–113 is an ATP binding site; sequence GRSGCGKS.

This sequence belongs to the ABC transporter superfamily. Aliphatic sulfonates importer (TC 3.A.1.17.2) family. In terms of assembly, the complex is composed of two ATP-binding proteins (SsuB), two transmembrane proteins (SsuC) and a solute-binding protein (SsuA).

It is found in the cell inner membrane. The catalysed reaction is ATP + H2O + aliphatic sulfonate-[sulfonate-binding protein]Side 1 = ADP + phosphate + aliphatic sulfonateSide 2 + [sulfonate-binding protein]Side 1.. Part of the ABC transporter complex SsuABC involved in aliphatic sulfonates import. Responsible for energy coupling to the transport system. This Burkholderia thailandensis (strain ATCC 700388 / DSM 13276 / CCUG 48851 / CIP 106301 / E264) protein is Aliphatic sulfonates import ATP-binding protein SsuB.